The following is a 548-amino-acid chain: 4-methyl-5-nitrocatechol 5-monooxygenase (548 aa).

The protein belongs to the PheA/TfdB FAD monooxygenase family. Monomer. FAD serves as cofactor.

It catalyses the reaction 4-methyl-5-nitrocatechol + NADPH + O2 = 2-hydroxy-5-methylquinone + nitrite + NADP(+) + H2O + H(+). It carries out the reaction 4-methyl-5-nitrocatechol + NADH + O2 = 2-hydroxy-5-methylquinone + nitrite + NAD(+) + H2O + H(+). With respect to regulation, activated by magnesium or manganese ions. Inhibited by concentrations of 4-methyl-5-nitrocatechol (MNC) above 2 mM. Functionally, involved in the degradation of 2,4-dinitrotoluene (2,4-DNT). Catalyzes the removal of the nitro group from 4-methyl-5-nitrocatechol (MNC) to yield 2-hydroxy-5-methylquinone. It can use both NADH and NADPH as electron donors, but prefers NADPH. Also able to use 4-nitrocatechol as substrate. In Burkholderia sp, this protein is 4-methyl-5-nitrocatechol 5-monooxygenase.